The chain runs to 661 residues: UvrABC system protein B (661 aa).

Positions 25 to 414 (AGLNSKKRSQ…DTVVELIIRP (390 aa)) constitute a Helicase ATP-binding domain. 38–45 (GITGSGKT) contributes to the ATP binding site. The Beta-hairpin signature appears at 91 to 114 (YYDYYQPEAYIARTDTFIEKDSSI). A Helicase C-terminal domain is found at 430–592 (QVEDLIGEIQ…IIPKTINRAI (163 aa)). Residues 621–656 (KAHIEKLKKDMLKAASNLEFEQAAKLRDQLKTLEEA) form the UVR domain.

It belongs to the UvrB family. In terms of assembly, forms a heterotetramer with UvrA during the search for lesions. Interacts with UvrC in an incision complex.

It is found in the cytoplasm. The UvrABC repair system catalyzes the recognition and processing of DNA lesions. A damage recognition complex composed of 2 UvrA and 2 UvrB subunits scans DNA for abnormalities. Upon binding of the UvrA(2)B(2) complex to a putative damaged site, the DNA wraps around one UvrB monomer. DNA wrap is dependent on ATP binding by UvrB and probably causes local melting of the DNA helix, facilitating insertion of UvrB beta-hairpin between the DNA strands. Then UvrB probes one DNA strand for the presence of a lesion. If a lesion is found the UvrA subunits dissociate and the UvrB-DNA preincision complex is formed. This complex is subsequently bound by UvrC and the second UvrB is released. If no lesion is found, the DNA wraps around the other UvrB subunit that will check the other stand for damage. The chain is UvrABC system protein B from Rickettsia felis (strain ATCC VR-1525 / URRWXCal2) (Rickettsia azadi).